The primary structure comprises 330 residues: MALSGSTPAPSWEEDECLDYYGMLSLHRMFEVVGGQLTECELELLAFLLDEAPGAPGGLARARSGLELLLELERRGQCDESNLRLLSQLLRVLARHDLLPHLARKRRRPVSPERYSYGNPSSSSKRTEDSCRRRRQASSSSDSPQSQWDTGSPPTKRQRRSRGRPSSGARQRRRAGLAASQQHQQHQELGRPSSEGKVTCDIRLRVRAEYCEHGPALEQGVASRRPQALARQLDVFGQATAVLRSRDLGSVVCDIKFSELSYLDAFWGDYLSGALLQALRGVFLTEALREAVGREAVRLLVSVDEADYEAGRRRLLLMEEEGGRRGTEAS.

Residues 25 to 104 enclose the DED domain; the sequence is SLHRMFEVVG…RHDLLPHLAR (80 aa). The Nuclear localization signal signature appears at 104-109; sequence RKRRRP. Positions 104 to 195 are disordered; the sequence is RKRRRPVSPE…HQELGRPSSE (92 aa). Positions 137-147 are enriched in low complexity; the sequence is ASSSSDSPQSQ. The short motif at 156–174 is the Bipartite nuclear localization signal element; it reads KRQRRSRGRPSSGARQRRR.

In terms of assembly, interacts with CASP8, CASP10 and GTF3C3. Homodimerizes and heterodimerizes with DEDD. In terms of tissue distribution, expression is high in liver, heart, kidney, and testis but low in brain, spleen, lung, and skeleton muscle.

The protein resides in the nucleus. Its subcellular location is the nucleolus. In terms of biological role, may play a critical role in death receptor-induced apoptosis and may target CASP8 and CASP10 to the nucleus. May regulate degradation of intermediate filaments during apoptosis. May play a role in the general transcription machinery in the nucleus and might be an important regulator of the activity of GTF3C3. In Mus musculus (Mouse), this protein is DNA-binding death effector domain-containing protein 2 (Dedd2).